The following is a 266-amino-acid chain: Large ribosomal subunit protein eL8 (266 aa).

The segment covering 1–11 (MPKGKKAKGKK) has biased composition (basic residues). Disordered regions lie at residues 1–28 (MPKG…KKVV) and 105–134 (ETKQ…KRPP). A compositionally biased stretch (basic and acidic residues) spans 116–130 (ARAEQKAAGKGDAPT).

This sequence belongs to the eukaryotic ribosomal protein eL8 family. In terms of assembly, component of the large ribosomal subunit.

Its subcellular location is the cytoplasm. Its function is as follows. Component of the large ribosomal subunit. The ribosome is a large ribonucleoprotein complex responsible for the synthesis of proteins in the cell. The sequence is that of Large ribosomal subunit protein eL8 (rpl7a) from Takifugu rubripes (Japanese pufferfish).